We begin with the raw amino-acid sequence, 163 residues long: Transcription elongation factor GreA (163 aa).

Residues 11–38 (FKQLEKELDRLKKERPGVIQAIKEAREE) are a coiled coil.

Belongs to the GreA/GreB family.

Necessary for efficient RNA polymerase transcription elongation past template-encoded arresting sites. The arresting sites in DNA have the property of trapping a certain fraction of elongating RNA polymerases that pass through, resulting in locked ternary complexes. Cleavage of the nascent transcript by cleavage factors such as GreA or GreB allows the resumption of elongation from the new 3'terminus. GreA releases sequences of 2 to 3 nucleotides. This chain is Transcription elongation factor GreA, found in Nitratidesulfovibrio vulgaris (strain ATCC 29579 / DSM 644 / CCUG 34227 / NCIMB 8303 / VKM B-1760 / Hildenborough) (Desulfovibrio vulgaris).